Here is an 82-residue protein sequence, read N- to C-terminus: Small ribosomal subunit protein bS16 (82 aa).

It belongs to the bacterial ribosomal protein bS16 family.

The sequence is that of Small ribosomal subunit protein bS16 from Deinococcus geothermalis (strain DSM 11300 / CIP 105573 / AG-3a).